Consider the following 125-residue polypeptide: Ribonuclease pancreatic (125 aa).

Residues K7 and R10 each coordinate substrate. H12 serves as the catalytic Proton acceptor. Disulfide bonds link C27/C85, C41/C96, C59/C111, and C66/C73. N35 carries an N-linked (GlcNAc...) asparagine glycan. Residues 42–46 (KPVNT), K67, and R86 each bind substrate. The active-site Proton donor is the H120.

The protein belongs to the pancreatic ribonuclease family. As to quaternary structure, monomer. Interacts with and forms tight 1:1 complexes with RNH1. Dimerization of two such complexes may occur. Interaction with RNH1 inhibits this protein. In terms of tissue distribution, pancreas.

The protein localises to the secreted. The catalysed reaction is an [RNA] containing cytidine + H2O = an [RNA]-3'-cytidine-3'-phosphate + a 5'-hydroxy-ribonucleotide-3'-[RNA].. It carries out the reaction an [RNA] containing uridine + H2O = an [RNA]-3'-uridine-3'-phosphate + a 5'-hydroxy-ribonucleotide-3'-[RNA].. Its function is as follows. Endonuclease that catalyzes the cleavage of RNA on the 3' side of pyrimidine nucleotides. Acts on single-stranded and double-stranded RNA. The protein is Ribonuclease pancreatic (RNASE1) of Spalax ehrenbergi (Middle East blind mole rat).